Here is a 789-residue protein sequence, read N- to C-terminus: Mediator of RNA polymerase II transcription subunit 15 (789 aa).

The interaction with SREBF1 stretch occupies residues 9–73 (DWRSAAFRQK…IHFRDIHNKK (65 aa)). 2 disordered regions span residues 88–140 (LTGG…APHG) and 257–326 (QQQA…PLVS). The segment covering 89 to 102 (TGGPTPGAAGIGMP) has biased composition (low complexity). Residues 108 to 118 (QSLGGMGGLGA) are compositionally biased toward gly residues. 3 stretches are compositionally biased toward low complexity: residues 257–274 (QQQA…SMQQ), 282–291 (ALPQQLSQLH), and 302–326 (AQQS…PLVS). Arg347 carries the post-translational modification Asymmetric dimethylarginine. Positions 404–531 (RFPPTSTMSA…PAGSSQAEEQ (128 aa)) are disordered. Positions 407 to 426 (PTSTMSAGPSSSISLGGQPT) are enriched in polar residues. Positions 427–450 (TQVSQSSLTMLSSPSPGQQVQTPQ) are enriched in low complexity. Residues 451-463 (SMPPPPQPSPQPG) are compositionally biased toward pro residues. A compositionally biased stretch (low complexity) spans 464–483 (SQPNSNVSSGPAPSPSSFLP). Polar residues-rich tracts occupy residues 494–504 (VTARTPQNFSV) and 512–530 (TPVN…QAEE). Positions 548 to 565 (RRMINKIDKNEDRKKDLS) match the Nuclear localization signal motif. The residue at position 604 (Thr604) is a Phosphothreonine.

This sequence belongs to the Mediator complex subunit 15 family. As to quaternary structure, component of the Mediator complex, which is composed of MED1, MED4, MED6, MED7, MED8, MED9, MED10, MED11, MED12, MED13, MED13L, MED14, MED15, MED16, MED17, MED18, MED19, MED20, MED21, MED22, MED23, MED24, MED25, MED26, MED27, MED29, MED30, MED31, CCNC, CDK8 and CDC2L6/CDK11. The MED12, MED13, CCNC and CDK8 subunits form a distinct module termed the CDK8 module. Mediator containing the CDK8 module is less active than Mediator lacking this module in supporting transcriptional activation. Individual preparations of the Mediator complex lacking one or more distinct subunits have been variously termed ARC, CRSP, DRIP, PC2, SMCC and TRAP. Interacts with SMAD2, SMAD3, SREBF1 and SREBF2. Interacts with WWTR1. Interacts with TRIM11. Ubiquitinated by TRIM11, leading to proteasomal degradation.

It localises to the cytoplasm. The protein localises to the nucleus. In terms of biological role, component of the Mediator complex, a coactivator involved in the regulated transcription of nearly all RNA polymerase II-dependent genes. Mediator functions as a bridge to convey information from gene-specific regulatory proteins to the basal RNA polymerase II transcription machinery. Mediator is recruited to promoters by direct interactions with regulatory proteins and serves as a scaffold for the assembly of a functional preinitiation complex with RNA polymerase II and the general transcription factors. Required for cholesterol-dependent gene regulation. Positively regulates the Nodal signaling pathway. This Mus musculus (Mouse) protein is Mediator of RNA polymerase II transcription subunit 15 (Med15).